Reading from the N-terminus, the 188-residue chain is Elongation factor P-like protein (188 aa).

The protein belongs to the elongation factor P family.

The sequence is that of Elongation factor P-like protein from Vibrio campbellii (strain ATCC BAA-1116).